The chain runs to 217 residues: Probable transaldolase (217 aa).

Lys83 serves as the catalytic Schiff-base intermediate with substrate.

Belongs to the transaldolase family. Type 3B subfamily.

It is found in the cytoplasm. It carries out the reaction D-sedoheptulose 7-phosphate + D-glyceraldehyde 3-phosphate = D-erythrose 4-phosphate + beta-D-fructose 6-phosphate. Its pathway is carbohydrate degradation; pentose phosphate pathway; D-glyceraldehyde 3-phosphate and beta-D-fructose 6-phosphate from D-ribose 5-phosphate and D-xylulose 5-phosphate (non-oxidative stage): step 2/3. Functionally, transaldolase is important for the balance of metabolites in the pentose-phosphate pathway. This chain is Probable transaldolase, found in Anaeromyxobacter sp. (strain K).